Consider the following 336-residue polypeptide: MAASLRLLGAASGLRYWSRRLRPAAGSFAAVCSRSVASKTPVGFIGLGNMGNPMAKNLMKHGYPLIIYDVFPDACKEFQDAGEQVVSSPADVAEKADRIITMLPTSINAIEAYSGANGILKKVKKGSLLIDSSTIDPAVSKELAKEVEKMGAVFMDAPVSGGVGAARSGNLTFMVGGVEDEFAAAQELLGCMGSNVVYCGAVGTGQAAKICNNMLLAISMIGTAEAMNLGIRLGLDPKLLAKILNMSSGRCWSSDTYNPVPGVMDGVPSANNYQGGFGATLMAKDLGLAQDSATSTKSPILLGSLAHQIYRMMCAKGYSKKDFSSVFQFLREEETF.

A mitochondrion-targeting transit peptide spans 1-36; sequence MAASLRLLGAASGLRYWSRRLRPAAGSFAAVCSRSV. An NAD(+)-binding site is contributed by 40–69; sequence TPVGFIGLGNMGNPMAKNLMKHGYPLIIYD. 2 positions are modified to N6-acetyllysine; alternate: Lys60 and Lys76. 2 positions are modified to N6-succinyllysine; alternate: Lys60 and Lys76. Lys95 bears the N6-succinyllysine mark. NAD(+) contacts are provided by residues 103 to 104 and Asn108; that span reads LP. Lys121 carries the post-translational modification N6-acetyllysine. Thr134 is an NAD(+) binding site. An N6-succinyllysine modification is found at Lys141. Lys145 is modified (N6-acetyllysine). At Lys149 the chain carries N6-acetyllysine; alternate. The residue at position 149 (Lys149) is an N6-succinyllysine; alternate. The active site involves Lys209. Lys238 and Lys242 each carry N6-acetyllysine; alternate. Residues Lys238 and Lys242 each carry the N6-succinyllysine; alternate modification. Lys284 provides a ligand contact to NAD(+). Lys297 carries the N6-succinyllysine modification. Lys321 carries the post-translational modification N6-acetyllysine; alternate. Position 321 is an N6-succinyllysine; alternate (Lys321).

Belongs to the HIBADH-related family. 3-hydroxyisobutyrate dehydrogenase subfamily. In terms of assembly, homodimer.

The protein localises to the mitochondrion. The catalysed reaction is 3-hydroxy-2-methylpropanoate + NAD(+) = 2-methyl-3-oxopropanoate + NADH + H(+). The protein operates within amino-acid degradation; L-valine degradation. The chain is 3-hydroxyisobutyrate dehydrogenase, mitochondrial (HIBADH) from Pongo abelii (Sumatran orangutan).